The following is a 298-amino-acid chain: Iron-regulated virulence regulatory protein IrgB (298 aa).

Residues 1-59 (MQDLSAVKAFHALCQHKSLTAAAKALEQPKSTLSRRLAQLEEDLGQSLLMRQGNRLTLT) enclose the HTH lysR-type domain. Positions 19–38 (LTAAAKALEQPKSTLSRRLA) form a DNA-binding region, H-T-H motif.

Belongs to the LysR transcriptional regulatory family.

Functionally, transcription activation of the irgA gene. In the presence of sufficient iron, transcription of both irgA and irgB is negatively regulated by a fur-like protein. In low iron conditions, negative regulation of transcription is removed, and production of irgB leads to positive transcriptional activation of irgA. This Vibrio cholerae serotype O1 (strain ATCC 39315 / El Tor Inaba N16961) protein is Iron-regulated virulence regulatory protein IrgB (irgB).